The following is a 515-amino-acid chain: Cytidine and dCMP deaminase domain-containing protein 1 (515 aa).

Polar residues-rich tracts occupy residues 1–11 (MKEAGQMQNLE) and 18–27 (SVSTQTGSMT). Disordered regions lie at residues 1–27 (MKEA…GSMT) and 56–83 (RQKS…STDK). The segment covering 60 to 83 (QKNEEGKHGPLGDNEEMTRVSTDK) has biased composition (basic and acidic residues). The region spanning 71–169 (GDNEEMTRVS…SLLTEASSSE (99 aa)) is the CMP/dCMP-type deaminase 1 domain. His110, Cys135, and Cys138 together coordinate Zn(2+). A Nuclear export signal motif is present at residues 272–284 (NLRQNMKDLILLL). The CMP/dCMP-type deaminase 2 domain maps to 318–483 (EIARHCMVQA…LNPSGAYGLE (166 aa)). His399 contributes to the Zn(2+) binding site. Catalysis depends on Glu401, which acts as the Proton donor. The Zn(2+) site is built by Cys427 and Cys430. Positions 489-511 (RRENGVLRPVPQKEEQHQDKKLC) match the Bipartite nuclear localization signal motif. The segment at 494–515 (VLRPVPQKEEQHQDKKLCLGIH) is disordered.

The protein belongs to the cytidine and deoxycytidylate deaminase family. It depends on Zn(2+) as a cofactor.

The protein localises to the cytoplasm. The protein resides in the nucleus. The catalysed reaction is 2'-deoxycytidine + H2O + H(+) = 2'-deoxyuridine + NH4(+). The enzyme catalyses cytidine + H2O + H(+) = uridine + NH4(+). In terms of biological role, catalyzes the deamination of cytidine and deoxycytidine into uridine and deoxyuridine, respectively. May play an important role in testicular development and spermatogenesis. This is Cytidine and dCMP deaminase domain-containing protein 1 (CDADC1) from Pongo abelii (Sumatran orangutan).